The primary structure comprises 100 residues: Small ribosomal subunit protein uS14c (100 aa).

The protein belongs to the universal ribosomal protein uS14 family. In terms of assembly, part of the 30S ribosomal subunit.

It localises to the plastid. Its subcellular location is the chloroplast. Functionally, binds 16S rRNA, required for the assembly of 30S particles. In Amborella trichopoda, this protein is Small ribosomal subunit protein uS14c.